Reading from the N-terminus, the 117-residue chain is MVASDSRPMRLRLRAELFLASFAVREESIRSKKEWTYISKYIKGILKSRLSRREQSRWNIIDDTTSMAFFEEFASLNPVFHTFLFYGRRDGEDLSFHIVGFFRLSIRGYIFFLWESF.

The protein resides in the mitochondrion. This is an uncharacterized protein from Arabidopsis thaliana (Mouse-ear cress).